The sequence spans 70 residues: Cold shock-like protein CspG (70 aa).

Residues 7-67 (GLVKWFNADK…GQRGPAAANV (61 aa)) form the CSD domain.

The protein resides in the cytoplasm. The polypeptide is Cold shock-like protein CspG (cspG) (Escherichia coli O157:H7).